Here is a 512-residue protein sequence, read N- to C-terminus: Histidine ammonia-lyase (512 aa).

Positions 142–144 (ASG) form a cross-link, 5-imidazolinone (Ala-Gly). Ser-143 carries the post-translational modification 2,3-didehydroalanine (Ser).

The protein belongs to the PAL/histidase family. In terms of processing, contains an active site 4-methylidene-imidazol-5-one (MIO), which is formed autocatalytically by cyclization and dehydration of residues Ala-Ser-Gly.

Its subcellular location is the cytoplasm. It catalyses the reaction L-histidine = trans-urocanate + NH4(+). It participates in amino-acid degradation; L-histidine degradation into L-glutamate; N-formimidoyl-L-glutamate from L-histidine: step 1/3. The sequence is that of Histidine ammonia-lyase from Bartonella quintana (strain Toulouse) (Rochalimaea quintana).